Reading from the N-terminus, the 76-residue chain is Brevinin-2ISb (76 aa).

A signal peptide spans 1 to 22 (MFTMKKSLLVLFFLGTISLSLC). A propeptide spans 23 to 41 (QEERNADEEDGGEATEEEV) (removed in mature form). Cys-70 and Cys-76 are oxidised to a cystine.

In terms of tissue distribution, expressed by the skin glands.

The protein localises to the secreted. Functionally, has antimicrobial activity against Gram-negative bacterium E.coli ATCC 8739 (MIC=12.5 ug), against Gram positive bacteria S.aureus ATCC 6538 (MIC=6.3 ug) and B.subtilis ATCC 6633 (MIC=25 ug). Has no activity against methicillin-resistant S.aureus ATCC 43300 (MIC= ug) and fungus C.albicans ATCC 90028. The polypeptide is Brevinin-2ISb (Odorrana ishikawae (Ishikawa's frog)).